Consider the following 188-residue polypeptide: Elongation factor P (188 aa).

This sequence belongs to the elongation factor P family.

The protein resides in the cytoplasm. It functions in the pathway protein biosynthesis; polypeptide chain elongation. Functionally, involved in peptide bond synthesis. Stimulates efficient translation and peptide-bond synthesis on native or reconstituted 70S ribosomes in vitro. Probably functions indirectly by altering the affinity of the ribosome for aminoacyl-tRNA, thus increasing their reactivity as acceptors for peptidyl transferase. In Rhodopseudomonas palustris (strain HaA2), this protein is Elongation factor P.